The following is a 584-amino-acid chain: MKAIIVLLMVVTSNADRICTGITSSNSPHVVKTATQGEVNVTGVIPLTTTPTKSHFANLKGTQTRGKLCPNCFNCTDLDVALGRPKCMGNTPSAKVSILHEVKPATSGCFPIMHDRTKIRQLPNLLRGYENIRLSTSNVINTETAPGGPYKVGTSGSCPNVANGNGFFNTMAWVIPKDNNKTAINPVTVEVPYICSEGEDQITVWGFHSDDKTQMERLYGDSNPQKFTSSANGVTTHYVSQIGGFPNQTEDEGLKQSGRIVVDYMVQKPGKTGTIVYQRGILLPQKVWCASGRSKVIKGSLPLIGEADCLHEKYGGLNKSKPYYTGEHAKAIGNCPIWVKTPLKLANGTKYRPPAKLLKERGFFGAIAGFLEGGWEGMIAGWHGYTSHGAHGVAVAADLKSTQEAINKITKNLNYLSELEVKNLQRLSGAMNELHDEILELDEKVDDLRADTISSQIELAVLLSNEGIINSEDEHLLALERKLKKMLGPSAVEIGNGCFETKHKCNQTCLDRIAAGTFNAGDFSLPTFDSLNITAASLNDDGLDNHTILLYYSTAASSLAVTLMIAIFIVYMVSRDNVSCSICL.

The N-terminal stretch at 1–15 is a signal peptide; the sequence is MKAIIVLLMVVTSNA. At 16–552 the chain is on the extracellular side; the sequence is DRICTGITSS…LDNHTILLYY (537 aa). Intrachain disulfides connect Cys19–Cys498, Cys75–Cys87, Cys109–Cys158, and Cys505–Cys509. N-linked (GlcNAc...) asparagine; by host glycosylation is found at Asn40 and Asn74. N-linked (GlcNAc...) asparagine; by host glycosylation is found at Asn180, Asn247, Asn318, Asn347, Asn506, Asn532, and Asn545. Residues 553–573 traverse the membrane as a helical segment; it reads STAASSLAVTLMIAIFIVYMV. Residues 574 to 584 lie on the Cytoplasmic side of the membrane; sequence SRDNVSCSICL. 2 S-palmitoyl cysteine; by host lipidation sites follow: Cys580 and Cys583.

It belongs to the influenza viruses hemagglutinin family. Homotrimer of disulfide-linked HA1-HA2. Palmitoylated. In terms of processing, in natural infection, inactive HA is matured into HA1 and HA2 outside the cell by one or more trypsin-like, arginine-specific endoprotease secreted by the bronchial epithelial cells. One identified protease that may be involved in this process is secreted in lungs by club cells.

It is found in the virion membrane. It localises to the host apical cell membrane. Functionally, binds to sialic acid-containing receptors on the cell surface, bringing about the attachment of the virus particle to the cell. Plays a major role in the determination of host range restriction and virulence. Class I viral fusion protein. Responsible for penetration of the virus into the cell cytoplasm by mediating the fusion of the membrane of the endocytosed virus particle with the endosomal membrane. Low pH in endosomes induce an irreversible conformational change in HA2, releasing the fusion hydrophobic peptide. Several trimers are required to form a competent fusion pore. This is Hemagglutinin from Influenza B virus (strain B/Lee/1940).